Reading from the N-terminus, the 403-residue chain is Imidazolonepropionase (403 aa).

Fe(3+) contacts are provided by His74 and His76. Zn(2+)-binding residues include His74 and His76. Residues Arg83, Tyr146, and His179 each coordinate 4-imidazolone-5-propanoate. Tyr146 is a binding site for N-formimidoyl-L-glutamate. His242 contacts Fe(3+). His242 contributes to the Zn(2+) binding site. A 4-imidazolone-5-propanoate-binding site is contributed by Gln245. Asp317 provides a ligand contact to Fe(3+). Residue Asp317 coordinates Zn(2+). The N-formimidoyl-L-glutamate site is built by Asn319 and Gly321. Thr322 is a 4-imidazolone-5-propanoate binding site.

Belongs to the metallo-dependent hydrolases superfamily. HutI family. The cofactor is Zn(2+). Fe(3+) serves as cofactor.

The protein resides in the cytoplasm. It catalyses the reaction 4-imidazolone-5-propanoate + H2O = N-formimidoyl-L-glutamate. It participates in amino-acid degradation; L-histidine degradation into L-glutamate; N-formimidoyl-L-glutamate from L-histidine: step 3/3. Catalyzes the hydrolytic cleavage of the carbon-nitrogen bond in imidazolone-5-propanoate to yield N-formimidoyl-L-glutamate. It is the third step in the universal histidine degradation pathway. The protein is Imidazolonepropionase of Sphingopyxis alaskensis (strain DSM 13593 / LMG 18877 / RB2256) (Sphingomonas alaskensis).